Reading from the N-terminus, the 1353-residue chain is DNA-directed RNA polymerase subunit beta' (1353 aa).

The unknown stretch occupies residues 1-117 (MSDNRLFTSV…AFQKLNDLFK (117 aa)). The tract at residues 118-1353 (LYNHFPSISS…SELTKKTNQN (1236 aa)) is DNA-directed RNA polymerase subunit beta'. Zn(2+)-binding residues include Cys-189, Cys-191, Cys-203, and Cys-206. Mg(2+) contacts are provided by Asp-578, Asp-580, and Asp-582.

Belongs to the RNA polymerase beta' chain family. In terms of assembly, the RNAP catalytic core consists of 2 alpha, 1 beta, 1 beta' and 1 omega subunit. When a sigma factor is associated with the core the holoenzyme is formed, which can initiate transcription. Mg(2+) is required as a cofactor. The cofactor is Zn(2+).

The catalysed reaction is RNA(n) + a ribonucleoside 5'-triphosphate = RNA(n+1) + diphosphate. DNA-dependent RNA polymerase catalyzes the transcription of DNA into RNA using the four ribonucleoside triphosphates as substrates. This Aster yellows witches'-broom phytoplasma (strain AYWB) protein is DNA-directed RNA polymerase subunit beta'.